The primary structure comprises 246 residues: 7-cyano-7-deazaguanine synthase (246 aa).

24–34 (FSGGLDSTTVL) contributes to the ATP binding site. Residues Cys-209, Cys-219, Cys-222, and Cys-225 each contribute to the Zn(2+) site.

It belongs to the QueC family. Zn(2+) is required as a cofactor.

It catalyses the reaction 7-carboxy-7-deazaguanine + NH4(+) + ATP = 7-cyano-7-deazaguanine + ADP + phosphate + H2O + H(+). Its pathway is purine metabolism; 7-cyano-7-deazaguanine biosynthesis. Its function is as follows. Catalyzes the ATP-dependent conversion of 7-carboxy-7-deazaguanine (CDG) to 7-cyano-7-deazaguanine (preQ(0)). The polypeptide is 7-cyano-7-deazaguanine synthase (Polynucleobacter asymbioticus (strain DSM 18221 / CIP 109841 / QLW-P1DMWA-1) (Polynucleobacter necessarius subsp. asymbioticus)).